We begin with the raw amino-acid sequence, 608 residues long: Membrane protein insertase YidC (608 aa).

The helical transmembrane segment at 8–28 (LLLATALSFLVILGWYFFFPP) threads the bilayer. Residues 33-61 (PQPATEVTETAPQGDTTAPAAAPSAGAAT) are disordered. Transmembrane regions (helical) follow at residues 378-398 (MGVA…PLAY), 448-468 (LPIL…FVTL), 482-502 (LSVP…WAAP), 506-526 (SLLS…SMWV), and 542-562 (IFAW…SGLV).

This sequence belongs to the OXA1/ALB3/YidC family. Type 1 subfamily. Interacts with the Sec translocase complex via SecD. Specifically interacts with transmembrane segments of nascent integral membrane proteins during membrane integration.

Its subcellular location is the cell inner membrane. Its function is as follows. Required for the insertion and/or proper folding and/or complex formation of integral membrane proteins into the membrane. Involved in integration of membrane proteins that insert both dependently and independently of the Sec translocase complex, as well as at least some lipoproteins. Aids folding of multispanning membrane proteins. The polypeptide is Membrane protein insertase YidC (Ruegeria sp. (strain TM1040) (Silicibacter sp.)).